The primary structure comprises 221 residues: Ribosomal RNA small subunit methyltransferase G (221 aa).

S-adenosyl-L-methionine contacts are provided by Gly78, Phe83, and Arg150.

This sequence belongs to the methyltransferase superfamily. RNA methyltransferase RsmG family.

The protein resides in the cytoplasm. Functionally, specifically methylates the N7 position of a guanine in 16S rRNA. This Bifidobacterium longum (strain DJO10A) protein is Ribosomal RNA small subunit methyltransferase G.